A 372-amino-acid chain; its full sequence is Putative aminopeptidase SgcX (372 aa).

Residues H67 and D180 each coordinate a divalent metal cation. E212 functions as the Proton acceptor in the catalytic mechanism. The a divalent metal cation site is built by E213, D235, and H329.

This sequence belongs to the peptidase M42 family. The cofactor is a divalent metal cation.

In Salmonella typhi, this protein is Putative aminopeptidase SgcX (sgcX).